We begin with the raw amino-acid sequence, 404 residues long: 1-deoxy-D-xylulose 5-phosphate reductoisomerase (404 aa).

Residues threonine 10, glycine 11, serine 12, isoleucine 13, glycine 36, arginine 37, asparagine 38, and asparagine 124 each coordinate NADPH. Residue lysine 125 coordinates 1-deoxy-D-xylulose 5-phosphate. Glutamate 126 is a binding site for NADPH. Residue aspartate 150 coordinates Mn(2+). Serine 151, glutamate 152, serine 186, and histidine 209 together coordinate 1-deoxy-D-xylulose 5-phosphate. Glutamate 152 is a Mn(2+) binding site. Glycine 215 serves as a coordination point for NADPH. 1-deoxy-D-xylulose 5-phosphate-binding residues include serine 222, asparagine 227, lysine 228, and glutamate 231. Glutamate 231 is a binding site for Mn(2+).

The protein belongs to the DXR family. In terms of assembly, homodimer. Mg(2+) serves as cofactor. Requires Mn(2+) as cofactor.

The enzyme catalyses 2-C-methyl-D-erythritol 4-phosphate + NADP(+) = 1-deoxy-D-xylulose 5-phosphate + NADPH + H(+). It participates in isoprenoid biosynthesis; isopentenyl diphosphate biosynthesis via DXP pathway; isopentenyl diphosphate from 1-deoxy-D-xylulose 5-phosphate: step 1/6. Catalyzes the NADPH-dependent rearrangement and reduction of 1-deoxy-D-xylulose-5-phosphate (DXP) to 2-C-methyl-D-erythritol 4-phosphate (MEP). The chain is 1-deoxy-D-xylulose 5-phosphate reductoisomerase from Erwinia tasmaniensis (strain DSM 17950 / CFBP 7177 / CIP 109463 / NCPPB 4357 / Et1/99).